Consider the following 316-residue polypeptide: Transaldolase 1 (316 aa).

Residue Lys-131 is the Schiff-base intermediate with substrate of the active site.

It belongs to the transaldolase family. Type 1 subfamily. As to quaternary structure, homodimer.

The protein resides in the cytoplasm. It catalyses the reaction D-sedoheptulose 7-phosphate + D-glyceraldehyde 3-phosphate = D-erythrose 4-phosphate + beta-D-fructose 6-phosphate. The protein operates within carbohydrate degradation; pentose phosphate pathway; D-glyceraldehyde 3-phosphate and beta-D-fructose 6-phosphate from D-ribose 5-phosphate and D-xylulose 5-phosphate (non-oxidative stage): step 2/3. In terms of biological role, transaldolase is important for the balance of metabolites in the pentose-phosphate pathway. The chain is Transaldolase 1 from Pectobacterium atrosepticum (strain SCRI 1043 / ATCC BAA-672) (Erwinia carotovora subsp. atroseptica).